The primary structure comprises 224 residues: Viral late gene transcription factor 3 (224 aa).

A zinc finger spans residues 6–26 (CSGCRHNGIVSEQGYEYCIFC).

The protein belongs to the orthopoxvirus VLTF-3/OPG127 family. Interacts with the late transcription elongation factor VLTF-4/OPG110. Interacts with the late transcription factors VLTF-1/OPG093.

Acts with RNA polymerase to initiate transcription from late gene promoters. The chain is Viral late gene transcription factor 3 (OPG127) from Vaccinia virus (strain Ankara) (VACV).